The chain runs to 37 residues: Large ribosomal subunit protein bL36 (37 aa).

The protein belongs to the bacterial ribosomal protein bL36 family.

The sequence is that of Large ribosomal subunit protein bL36 from Beutenbergia cavernae (strain ATCC BAA-8 / DSM 12333 / CCUG 43141 / JCM 11478 / NBRC 16432 / NCIMB 13614 / HKI 0122).